Reading from the N-terminus, the 111-residue chain is MKDPYDVIKRHYVTEKAKTLEGLSLGSGEGKKKGSFCKHPKYTFIVACDATKPLIAQALESIYADKKVKVKSVNTICVKPQPARMFRGKRKGKTAGFKKAVVTFYEGHSIG.

The protein belongs to the universal ribosomal protein uL23 family. In terms of assembly, part of the 50S ribosomal subunit. Contacts protein L29, and trigger factor when it is bound to the ribosome.

In terms of biological role, one of the early assembly proteins it binds 23S rRNA. One of the proteins that surrounds the polypeptide exit tunnel on the outside of the ribosome. Forms the main docking site for trigger factor binding to the ribosome. This chain is Large ribosomal subunit protein uL23, found in Chlamydia felis (strain Fe/C-56) (Chlamydophila felis).